The following is a 516-amino-acid chain: Tyrosine decarboxylase 3 (516 aa).

K319 carries the post-translational modification N6-(pyridoxal phosphate)lysine.

Belongs to the group II decarboxylase family. As to quaternary structure, homodimer. Requires pyridoxal 5'-phosphate as cofactor.

The enzyme catalyses L-tyrosine + H(+) = tyramine + CO2. The chain is Tyrosine decarboxylase 3 (TYRDC-3) from Petroselinum crispum (Parsley).